Consider the following 256-residue polypeptide: Neuroendocrine secretory protein 55 (256 aa).

The signal sequence occupies residues methionine 1–alanine 46. Residues serine 61 to histidine 256 are disordered. The span at glutamate 86 to cysteine 103 shows a compositional bias: basic and acidic residues. Composition is skewed to acidic residues over residues leucine 104–proline 139 and leucine 206–serine 216. Residues glutamine 225 to arginine 236 are compositionally biased toward basic residues.

This sequence belongs to the NESP55 family. Binds keratan sulfate chains. Post-translationally, may be proteolytically processed to give rise to a number of active peptides.

It is found in the cytoplasmic vesicle. It localises to the secretory vesicle. The protein resides in the synaptic vesicle. Its subcellular location is the secreted. The chain is Neuroendocrine secretory protein 55 from Rattus norvegicus (Rat).